A 296-amino-acid chain; its full sequence is Nucleotide-binding protein MGAS2096_Spy0550 (296 aa).

13–20 (GMSGAGKT) is a binding site for ATP. 63–66 (DMRS) lines the GTP pocket.

It belongs to the RapZ-like family.

In terms of biological role, displays ATPase and GTPase activities. This chain is Nucleotide-binding protein MGAS2096_Spy0550, found in Streptococcus pyogenes serotype M12 (strain MGAS2096).